Reading from the N-terminus, the 270-residue chain is Putative pyruvate, phosphate dikinase regulatory protein (270 aa).

Residue 147–154 (GVSRSSKT) coordinates ADP.

Belongs to the pyruvate, phosphate/water dikinase regulatory protein family. PDRP subfamily.

The catalysed reaction is N(tele)-phospho-L-histidyl/L-threonyl-[pyruvate, phosphate dikinase] + ADP = N(tele)-phospho-L-histidyl/O-phospho-L-threonyl-[pyruvate, phosphate dikinase] + AMP + H(+). It carries out the reaction N(tele)-phospho-L-histidyl/O-phospho-L-threonyl-[pyruvate, phosphate dikinase] + phosphate + H(+) = N(tele)-phospho-L-histidyl/L-threonyl-[pyruvate, phosphate dikinase] + diphosphate. Its function is as follows. Bifunctional serine/threonine kinase and phosphorylase involved in the regulation of the pyruvate, phosphate dikinase (PPDK) by catalyzing its phosphorylation/dephosphorylation. This Citrifermentans bemidjiense (strain ATCC BAA-1014 / DSM 16622 / JCM 12645 / Bem) (Geobacter bemidjiensis) protein is Putative pyruvate, phosphate dikinase regulatory protein.